The primary structure comprises 322 residues: Ferredoxin--NADP reductase (322 aa).

The FAD site is built by Asp34, Gln42, Tyr47, Val87, Phe120, Asp279, and Thr320.

Belongs to the ferredoxin--NADP reductase type 2 family. As to quaternary structure, homodimer. It depends on FAD as a cofactor.

The enzyme catalyses 2 reduced [2Fe-2S]-[ferredoxin] + NADP(+) + H(+) = 2 oxidized [2Fe-2S]-[ferredoxin] + NADPH. This is Ferredoxin--NADP reductase from Streptococcus gordonii (strain Challis / ATCC 35105 / BCRC 15272 / CH1 / DL1 / V288).